The primary structure comprises 206 residues: MELKLLNDQGQSSSNVAAPDTIFGRDYNEALIHQVVVAYQANARSGNRKQKDREEVHHTTKKPWRQKGTGRARAGMSSSPLWRGGGRIFPNSPDENFSHKVNKKMYRAGLCSILSQLAREGRLSVIESLSVDAPKTKLLSQKLKGMGLDSVLVITDSLDENLLLASRNLPNVLICEPRHADPVSLVFYKKILITKLALAKIEEMLA.

Residues 43–78 (ARSGNRKQKDREEVHHTTKKPWRQKGTGRARAGMSS) are disordered. Residues 49–58 (KQKDREEVHH) show a composition bias toward basic and acidic residues. Over residues 59 to 70 (TTKKPWRQKGTG) the composition is skewed to basic residues.

This sequence belongs to the universal ribosomal protein uL4 family. As to quaternary structure, part of the 50S ribosomal subunit.

One of the primary rRNA binding proteins, this protein initially binds near the 5'-end of the 23S rRNA. It is important during the early stages of 50S assembly. It makes multiple contacts with different domains of the 23S rRNA in the assembled 50S subunit and ribosome. Functionally, forms part of the polypeptide exit tunnel. This Herminiimonas arsenicoxydans protein is Large ribosomal subunit protein uL4.